The primary structure comprises 56 residues: U-limacoditoxin(3)-Dv21 (56 aa).

Positions 1 to 19 (MKKVIMLLLIFALFAYALS) are cleaved as a signal peptide. 3 disulfides stabilise this stretch: cysteine 26–cysteine 41, cysteine 33–cysteine 46, and cysteine 40–cysteine 53.

This sequence belongs to the limacoditoxin-22 family. Expressed by the venom secretory cell of the spine. The spine is a cuticular structure containing a single large nucleated venom-secreting cell at its base. It is an independent unit capable of producing, storing and injecting venom. On the back of D.vulnerans caterpillars, spines are grouped together by 50 to 100 to form scoli, of which there are eight in D.vulnerans.

It is found in the secreted. In terms of biological role, probable toxin. Shows a moderate antiparasitic activity against the major pathogenic nematode of ruminants (H.contortus, IC(50)=22.1 uM). Does not show insecticidal activities. Does not induce increase in intracellular calcium in mouse DRG neurons, suggesting that it does not induce pain. In Doratifera vulnerans (Mottled cup moth), this protein is U-limacoditoxin(3)-Dv21.